We begin with the raw amino-acid sequence, 301 residues long: 2-dehydropantoate 2-reductase (301 aa).

NADP(+) contacts are provided by residues 7 to 12, K74, N99, and A123; that span reads GAGAIG. The active-site Proton donor is K179. Substrate contacts are provided by residues K179, N183, N187, N197, and 246-249; that span reads NYNS. Position 261 (E261) interacts with NADP(+).

Belongs to the ketopantoate reductase family.

Its subcellular location is the cytoplasm. The enzyme catalyses (R)-pantoate + NAD(+) = 2-dehydropantoate + NADH + H(+). It carries out the reaction (R)-pantoate + NADP(+) = 2-dehydropantoate + NADPH + H(+). It participates in cofactor biosynthesis; coenzyme A biosynthesis. In terms of biological role, catalyzes the NAD(P)H-dependent reduction of ketopantoate into pantoic acid. This chain is 2-dehydropantoate 2-reductase, found in Pyrococcus horikoshii (strain ATCC 700860 / DSM 12428 / JCM 9974 / NBRC 100139 / OT-3).